The sequence spans 472 residues: Uronate isomerase (472 aa).

Belongs to the metallo-dependent hydrolases superfamily. Uronate isomerase family.

The catalysed reaction is D-glucuronate = D-fructuronate. The enzyme catalyses aldehydo-D-galacturonate = keto-D-tagaturonate. Its pathway is carbohydrate metabolism; pentose and glucuronate interconversion. The polypeptide is Uronate isomerase (Nostoc punctiforme (strain ATCC 29133 / PCC 73102)).